The following is a 689-amino-acid chain: Glycine--tRNA ligase beta subunit (689 aa).

This sequence belongs to the class-II aminoacyl-tRNA synthetase family. As to quaternary structure, tetramer of two alpha and two beta subunits.

The protein resides in the cytoplasm. It carries out the reaction tRNA(Gly) + glycine + ATP = glycyl-tRNA(Gly) + AMP + diphosphate. The sequence is that of Glycine--tRNA ligase beta subunit from Acinetobacter baumannii (strain ATCC 17978 / DSM 105126 / CIP 53.77 / LMG 1025 / NCDC KC755 / 5377).